A 134-amino-acid chain; its full sequence is Profilin-2 (134 aa).

A disulfide bond links C13 and C118. The Involved in PIP2 interaction signature appears at 84-100; that stretch reads AVIRGKKGSGGITIKKT. T114 carries the phosphothreonine modification.

This sequence belongs to the profilin family. Post-translationally, phosphorylated by MAP kinases.

It is found in the cytoplasm. Its subcellular location is the cytoskeleton. The chain is Profilin-2 from Olea europaea (Common olive).